The sequence spans 504 residues: MKKTEMGRFNISPDEDSSSYSSNGDFNYSYPTKQAALKSHYVDVDPENQNFLLESNLGKKKYETDFHPGTTSFGMSVFNLSNAIVGSGILGLSYAMANTGIALFIILLTFVSIFSLYSVHLLLKTANEGGSLLYEQLGHKAYGLAGKLAASGSITMQNIGAMSSYLFIVKYELPLVIKALMNIEDTNGLWYLNGDYLVLLVSFVLILPLSLLRNLGYLGYTSGLSLLCMIFFLIVVICKKFQIPCPVEVALMANETVNGTFTQVALAALASNSTAADTCRPRYFIFNSQTVYAVPILTFSFVCHPAVLPIYEELKSRSRRRMMNVSKISFFAMFLMYLLAALFGYLTFYEHVESELLHTYSAIVGTDILLLVVRLAVLVAVTLTVPVVIFPIRSSVTHLLCPTKEFSWFRHSVITVTILAFTNLLVIFVPTIRDIFGFIGASAAAMLIFILPSAFYIKLVKKEPMRSVQKIGALCFLLSGVVVMIGSMGLIVLDWVHDASAGGH.

Residues 1 to 22 (MKKTEMGRFNISPDEDSSSYSS) are disordered. At 1-76 (MKKTEMGRFN…HPGTTSFGMS (76 aa)) the chain is on the cytoplasmic side. The regulates protein turnover upon amino acid deprivation stretch occupies residues 1–96 (MKKTEMGRFN…SGILGLSYAM (96 aa)). Residues Ser12, Ser21, Ser22, and Ser55 each carry the phosphoserine modification. Residues 77–96 (VFNLSNAIVGSGILGLSYAM) form a helical membrane-spanning segment. Na(+) is bound at residue Asn82. Over 97-102 (ANTGIA) the chain is Extracellular. A helical membrane pass occupies residues 103-123 (LFIILLTFVSIFSLYSVHLLL). The Cytoplasmic segment spans residues 124–158 (KTANEGGSLLYEQLGHKAYGLAGKLAASGSITMQN). A helical membrane pass occupies residues 159-177 (IGAMSSYLFIVKYELPLVI). Residues 178-188 (KALMNIEDTNG) are Extracellular-facing. A helical transmembrane segment spans residues 189–209 (LWYLNGDYLVLLVSFVLILPL). The Cytoplasmic segment spans residues 210-217 (SLLRNLGY). Residues 218–238 (LGYTSGLSLLCMIFFLIVVIC) traverse the membrane as a helical segment. Over 239–290 (KKFQIPCPVEVALMANETVNGTFTQVALAALASNSTAADTCRPRYFIFNSQT) the chain is Extracellular. A disulfide bond links Cys245 and Cys279. 3 N-linked (GlcNAc...) asparagine glycosylation sites follow: Asn254, Asn258, and Asn272. Residues 291-311 (VYAVPILTFSFVCHPAVLPIY) form a helical membrane-spanning segment. Over 312–327 (EELKSRSRRRMMNVSK) the chain is Cytoplasmic. The helical transmembrane segment at 328–348 (ISFFAMFLMYLLAALFGYLTF) threads the bilayer. The Extracellular segment spans residues 349 to 369 (YEHVESELLHTYSAIVGTDIL). A helical transmembrane segment spans residues 370–390 (LLVVRLAVLVAVTLTVPVVIF). Thr384 is a Na(+) binding site. Residues 391-411 (PIRSSVTHLLCPTKEFSWFRH) are Cytoplasmic-facing. Residues 412–432 (SVITVTILAFTNLLVIFVPTI) traverse the membrane as a helical segment. Over 433–434 (RD) the chain is Extracellular. Residues 435–455 (IFGFIGASAAAMLIFILPSAF) form a helical membrane-spanning segment. The Cytoplasmic segment spans residues 456-470 (YIKLVKKEPMRSVQK). A helical transmembrane segment spans residues 471–493 (IGALCFLLSGVVVMIGSMGLIVL). At 494 to 504 (DWVHDASAGGH) the chain is on the extracellular side.

Belongs to the amino acid/polyamine transporter 2 family. Polyubiquitination by NEDD4L regulates the degradation and the activity of SLC38A2. In terms of tissue distribution, widely expressed. Expressed in skeletal muscle and adipose tissue (at protein level). Expressed by glutamatergic and GABAergic neurons together with astrocytes and other non-neuronal cells in the cerebral cortex (at protein level). Widely expressed in the central nervous systeme where, it is enriched in the spinal cord and the brainstem nuclei, especially those of the auditory system.

The protein localises to the cell membrane. It catalyses the reaction L-alanine(in) + Na(+)(in) = L-alanine(out) + Na(+)(out). The enzyme catalyses glycine(in) + Na(+)(in) = glycine(out) + Na(+)(out). The catalysed reaction is L-serine(in) + Na(+)(in) = L-serine(out) + Na(+)(out). It carries out the reaction L-proline(in) + Na(+)(in) = L-proline(out) + Na(+)(out). It catalyses the reaction L-methionine(in) + Na(+)(in) = L-methionine(out) + Na(+)(out). The enzyme catalyses L-histidine(in) + Na(+)(in) = L-histidine(out) + Na(+)(out). The catalysed reaction is L-asparagine(in) + Na(+)(in) = L-asparagine(out) + Na(+)(out). It carries out the reaction L-glutamine(in) + Na(+)(in) = L-glutamine(out) + Na(+)(out). It catalyses the reaction L-threonine(in) + Na(+)(in) = L-threonine(out) + Na(+)(out). The enzyme catalyses L-leucine(in) + Na(+)(in) = L-leucine(out) + Na(+)(out). The catalysed reaction is L-phenylalanine(in) + Na(+)(in) = L-phenylalanine(out) + Na(+)(out). Inhibited by N-methyl-D-glucamine. Inhibited by choline. Allosteric regulation of sodium ions binding by pH. Its function is as follows. Symporter that cotransports neutral amino acids and sodium ions from the extracellular to the intracellular side of the cell membrane. The transport is pH-sensitive, Li(+)-intolerant, electrogenic, driven by the Na(+) electrochemical gradient and cotransports of neutral amino acids and sodium ions with a stoichiometry of 1:1. May function in the transport of amino acids at the blood-brain barrier. May function in the transport of amino acids in the supply of maternal nutrients to the fetus through the placenta. Maintains a key metabolic glutamine/glutamate balance underpinning retrograde signaling by dendritic release of the neurotransmitter glutamate. Transports L-proline in differentiating osteoblasts for the efficient synthesis of proline-enriched proteins and provides proline essential for osteoblast differentiation and bone formation during bone development. This chain is Sodium-coupled neutral amino acid symporter 2, found in Rattus norvegicus (Rat).